The primary structure comprises 308 residues: tRNA pseudouridine synthase B (308 aa).

Asp47 serves as the catalytic Nucleophile.

Belongs to the pseudouridine synthase TruB family. Type 1 subfamily.

It carries out the reaction uridine(55) in tRNA = pseudouridine(55) in tRNA. Its function is as follows. Responsible for synthesis of pseudouridine from uracil-55 in the psi GC loop of transfer RNAs. This is tRNA pseudouridine synthase B from Rhodospirillum rubrum (strain ATCC 11170 / ATH 1.1.1 / DSM 467 / LMG 4362 / NCIMB 8255 / S1).